The sequence spans 487 residues: Nitrate reductase beta chain (487 aa).

4Fe-4S ferredoxin-type domains follow at residues 7–36 (IGMVMNLDKCIGCHTCSVTCKNTWTNRSGA), 172–203 (VFMMYLPRICEHCINPACVSSCPSGAMYKREE), and 205–234 (GIVLVDQNACRSWRYCVSSCPYKKVYFNWQ). 7 residues coordinate [4Fe-4S] cluster: Cys-16, Cys-19, Cys-22, Cys-26, Cys-181, Cys-184, and Cys-189. [3Fe-4S] cluster is bound by residues Cys-193, Cys-214, and Cys-220. [4Fe-4S] cluster contacts are provided by Cys-224, Cys-241, Cys-244, Cys-256, and Cys-260.

The cofactor is [4Fe-4S] cluster. [3Fe-4S] cluster serves as cofactor.

Its subcellular location is the cell membrane. The enzyme catalyses nitrate + a quinol = a quinone + nitrite + H2O. The beta chain is an electron transfer unit containing four cysteine clusters involved in the formation of iron-sulfur centers. Electrons are transferred from the gamma chain to the molybdenum cofactor of the alpha subunit. The protein is Nitrate reductase beta chain (narH) of Bacillus subtilis (strain 168).